The chain runs to 151 residues: RNA polymerase-binding transcription factor DksA (151 aa).

Residues 33 to 54 adopt a coiled-coil conformation; that stretch reads NEAQLAHFRRILEAWRNQLRDE. Cys-114, Cys-117, Cys-135, and Cys-138 together coordinate Zn(2+). Residues 114–138 form a dksA C4-type zinc finger; sequence CESCGVEIGIRRLEARPTADLCIDC.

It belongs to the DksA family. In terms of assembly, interacts directly with the RNA polymerase.

It localises to the cytoplasm. Functionally, transcription factor that acts by binding directly to the RNA polymerase (RNAP). Required for negative regulation of rRNA expression and positive regulation of several amino acid biosynthesis promoters. Also required for regulation of fis expression. This chain is RNA polymerase-binding transcription factor DksA, found in Escherichia coli O157:H7.